Reading from the N-terminus, the 419-residue chain is Histidine--tRNA ligase (419 aa).

The protein belongs to the class-II aminoacyl-tRNA synthetase family. As to quaternary structure, homodimer.

Its subcellular location is the cytoplasm. The catalysed reaction is tRNA(His) + L-histidine + ATP = L-histidyl-tRNA(His) + AMP + diphosphate + H(+). This chain is Histidine--tRNA ligase, found in Thiobacillus denitrificans (strain ATCC 25259 / T1).